The primary structure comprises 231 residues: Large ribosomal subunit protein uL1 (231 aa).

It belongs to the universal ribosomal protein uL1 family. Part of the 50S ribosomal subunit.

In terms of biological role, binds directly to 23S rRNA. The L1 stalk is quite mobile in the ribosome, and is involved in E site tRNA release. Its function is as follows. Protein L1 is also a translational repressor protein, it controls the translation of the L11 operon by binding to its mRNA. The sequence is that of Large ribosomal subunit protein uL1 from Azotobacter vinelandii (strain DJ / ATCC BAA-1303).